We begin with the raw amino-acid sequence, 693 residues long: MATSGANGPGSATASASNPRKFSEKIALQKQRQAEETAAFEEVMMDIGSTRLQAQKLRLAYTRSSHYGGSLPNVNQIGCGLAEFQSPLHSPLDSSRSTRHHGLVERVQRDPRRMVSPLRRYARHIDSSPYSPAYLSPPPESSWRRTMPWGSFPAEKGQLFRLPSALNRTSSDSALHTSVMNPSPQDTYPSPAAPSVLPSRRGGCLDGETDSKVPAIEENLLDDKHLLKPWDAKKLSSSSSRPRSCEVPGINIFPSPDQPATVPVLPPAMNTGGSLPDLTNLHFPPPLPTPLDPEETAYPSLSGGSSTSNLTHTMTHLGISGGLALGPGYDAPGLHSPLSHPSFQSSLSNPNLQASLSSPQPQLQGSHSHPSLPASSLARHALPTTSLGHPSLSAPALSSSSSSSSASSPVLGAPAYPASAPGASPRHRRVPLSPLSLPAGPADARRSQQQLPKQFSPTMSPTLSSITQGVALDTSKLPTDQRLPPYPYSPPSLVLPTQQPTPKPLQQPGLPSQACSVQPSGGQPPGRQLQYGTLYPPGPSGHGQQSYHRSMSDFSLGNLEQFNMENPSTSLALDPPGFSEGPGFLGGEGPVSGPQDPHALNHQNVTHCSRHGSGPNVILTGDASPGFSKEIAAALAGVPGFEVSAAGLGLGLGLEEELRMEPLGLEGLSMLSDPCALLPDPAVEDSFRSDRLQ.

A compositionally biased stretch (polar residues) spans 1-20 (MATSGANGPGSATASASNPR). The interval 1–30 (MATSGANGPGSATASASNPRKFSEKIALQK) is disordered. An N-acetylalanine modification is found at Ala2. Position 51 is an asymmetric dimethylarginine; by PRMT6 (Arg51). Phosphoserine occurs at positions 70, 86, and 90. 3 positions are modified to asymmetric dimethylarginine; by PRMT6: Arg99, Arg120, and Arg123. At Ser136 the chain carries Phosphoserine. Asymmetric dimethylarginine; by PRMT6 is present on residues Arg161 and Arg168. The residue at position 169 (Thr169) is a Phosphothreonine. Ser171 carries the post-translational modification Phosphoserine. Residues 174 to 188 (ALHTSVMNPSPQDTY) are compositionally biased toward polar residues. The disordered stretch occupies residues 174-210 (ALHTSVMNPSPQDTYPSPAAPSVLPSRRGGCLDGETD). A required for interaction with COP1 region spans residues 209-215 (TDSKVPA). A Glycyl lysine isopeptide (Lys-Gly) (interchain with G-Cter in SUMO2) cross-link involves residue Lys234. Positions 271-287 (TGGSLPDLTNLHFPPPL) match the Nuclear export signal motif. 3 disordered regions span residues 271–307 (TGGS…GSST), 335–463 (HSPL…SPTL), and 476–548 (KLPT…QSYH). Residue Ser274 is modified to Phosphoserine; by MARK2. The residue at position 306 (Ser306) is a Phosphoserine. A compositionally biased stretch (polar residues) spans 339–351 (SHPSFQSSLSNPN). Composition is skewed to low complexity over residues 352 to 378 (LQAS…SSLA) and 386 to 424 (SLGH…PGAS). 4 positions are modified to phosphoserine: Ser368, Ser393, Ser433, and Ser456. The segment covering 447–463 (SQQQLPKQFSPTMSPTL) has biased composition (polar residues). Phosphotyrosine is present on Tyr488. A phosphoserine mark is found at Ser489 and Ser492. The residue at position 501 (Thr501) is a Phosphothreonine. Phosphoserine occurs at positions 613 and 624.

The protein belongs to the TORC family. Binds, as a tetramer, through its N-terminal region, with the bZIP domain of CREB1. 'Arg-314' in the bZIP domain of CREB1 is essential for this interaction. Interaction, via its C-terminal, with TAF4, enhances recruitment of TAF4 to CREB1. Interacts with SIK2. Interacts with 14-3-3 proteins, YWHAB and YWHAG. Interacts (probably when phosphorylated at Ser-171) with YWHAE. Interacts with calmodulin-dependent catalytic subunit PPP3CA/calcineurin A. Interaction with COP1 mediates nuclear export and degradation of CRTC2. Phosphorylation/dephosphorylation states of Ser-171 are required for regulating transduction of CREB activity. CRTCs/TORCs are inactive when phosphorylated, and active when dephosphorylated at this site. This primary site of phosphorylation, is regulated by cAMP and calcium levels and is dependent on the phosphorylation of SIKs (SIK1 and SIK2) by LKB1. Following adenylyl cyclase activation, dephosphorylated at Ser-171 by PPP3CA/calcineurin A resulting in CRTC2 dissociation from 14-3-3 proteins and PPP3CA. Both insulin and AMPK increase this phosphorylation of CRTC2 while glucagon suppresses it. Phosphorylation at Ser-274 by MARK2 is induced under low glucose conditions and dephosphorylated in response to glucose influx. Phosphorylation at Ser-274 promotes interaction with 14-3-3 proteins and translocation to the cytoplasm. In terms of processing, asymmetric dimethylation of arginine resisues by PRMT6 enhances the association of CRTC2 with CREB on the promoters of gluconeogenic genes.

It localises to the cytoplasm. The protein resides in the nucleus. In terms of biological role, transcriptional coactivator for CREB1 which activates transcription through both consensus and variant cAMP response element (CRE) sites. Acts as a coactivator, in the SIK/TORC signaling pathway, being active when dephosphorylated and acts independently of CREB1 'Ser-133' phosphorylation. Enhances the interaction of CREB1 with TAF4. Regulates gluconeogenesis as a component of the LKB1/AMPK/TORC2 signaling pathway. Regulates the expression of specific genes such as the steroidogenic gene, StAR. Potent coactivator of PPARGC1A and inducer of mitochondrial biogenesis in muscle cells. This is CREB-regulated transcription coactivator 2 (CRTC2) from Bos taurus (Bovine).